The following is a 130-amino-acid chain: Small ribosomal subunit protein uS9 (130 aa).

The protein belongs to the universal ribosomal protein uS9 family.

The chain is Small ribosomal subunit protein uS9 from Bacillus thuringiensis subsp. konkukian (strain 97-27).